Reading from the N-terminus, the 390-residue chain is Cytochrome b (390 aa).

4 helical membrane passes run 32–52 (MGSL…FMAM), 76–98 (WFLR…IHMG), 113–133 (LWTI…LGYC), and 179–199 (FFAL…MHMM). Heme b-binding residues include His-82 and His-96. Residues His-183 and His-197 each contribute to the heme b site. Position 202 (His-202) interacts with a ubiquinone. 4 consecutive transmembrane segments (helical) span residues 225–245 (FVFK…LFVF), 289–309 (LMGV…PFTD), 321–341 (LSKL…QIGA), and 348–368 (YILM…VFIP).

It belongs to the cytochrome b family. Fungal cytochrome b-c1 complex contains 10 subunits; 3 respiratory subunits, 2 core proteins and 5 low-molecular weight proteins. Cytochrome b-c1 complex is a homodimer. The cofactor is heme b.

The protein resides in the mitochondrion inner membrane. Its function is as follows. Component of the ubiquinol-cytochrome c reductase complex (complex III or cytochrome b-c1 complex) that is part of the mitochondrial respiratory chain. The b-c1 complex mediates electron transfer from ubiquinol to cytochrome c. Contributes to the generation of a proton gradient across the mitochondrial membrane that is then used for ATP synthesis. This Naumovozyma castellii (Yeast) protein is Cytochrome b (COB).